Reading from the N-terminus, the 207-residue chain is Probable nicotinate-nucleotide adenylyltransferase (207 aa).

It belongs to the NadD family.

The catalysed reaction is nicotinate beta-D-ribonucleotide + ATP + H(+) = deamido-NAD(+) + diphosphate. It participates in cofactor biosynthesis; NAD(+) biosynthesis; deamido-NAD(+) from nicotinate D-ribonucleotide: step 1/1. Its function is as follows. Catalyzes the reversible adenylation of nicotinate mononucleotide (NaMN) to nicotinic acid adenine dinucleotide (NaAD). This chain is Probable nicotinate-nucleotide adenylyltransferase, found in Synechococcus sp. (strain JA-3-3Ab) (Cyanobacteria bacterium Yellowstone A-Prime).